The following is an 841-amino-acid chain: Translation initiation factor IF-2 (841 aa).

Residues 94 to 255 are disordered; sequence QRSPEEIEAE…RNAHGFQSPT (162 aa). A compositionally biased stretch (basic and acidic residues) spans 96-135; sequence SPEEIEAERKREMDERRAVENAARQKAEEEAKRRAEEDAR. A compositionally biased stretch (low complexity) spans 136 to 175; it reads NQPAAGQPASAPAQPVAAAEPVREAPAAAAPAPASAAPSA. Basic and acidic residues-rich tracts occupy residues 176–217 and 225–234; these read DARK…EKAP and TTDEESDSFR. Basic residues predominate over residues 235-248; it reads RGGRGKGKLKKRNA. Residues 341 to 510 form the tr-type G domain; sequence SRAPVVTVMG…LLQAEVLELK (170 aa). Positions 350–357 are G1; the sequence is GHVDHGKT. 350–357 provides a ligand contact to GTP; the sequence is GHVDHGKT. The tract at residues 375–379 is G2; it reads GITQH. Positions 396 to 399 are G3; the sequence is DTPG. GTP-binding positions include 396 to 400 and 450 to 453; these read DTPGH and NKID. The interval 450-453 is G4; it reads NKID. The G5 stretch occupies residues 486 to 488; sequence SAK.

Belongs to the TRAFAC class translation factor GTPase superfamily. Classic translation factor GTPase family. IF-2 subfamily.

It is found in the cytoplasm. Functionally, one of the essential components for the initiation of protein synthesis. Protects formylmethionyl-tRNA from spontaneous hydrolysis and promotes its binding to the 30S ribosomal subunits. Also involved in the hydrolysis of GTP during the formation of the 70S ribosomal complex. In Pseudomonas syringae pv. tomato (strain ATCC BAA-871 / DC3000), this protein is Translation initiation factor IF-2.